Here is a 107-residue protein sequence, read N- to C-terminus: DNA-directed RNA polymerase subunit omega (107 aa).

It belongs to the RNA polymerase subunit omega family. In terms of assembly, the RNAP catalytic core consists of 2 alpha, 1 beta, 1 beta' and 1 omega subunit. When a sigma factor is associated with the core the holoenzyme is formed, which can initiate transcription.

The enzyme catalyses RNA(n) + a ribonucleoside 5'-triphosphate = RNA(n+1) + diphosphate. Promotes RNA polymerase assembly. Latches the N- and C-terminal regions of the beta' subunit thereby facilitating its interaction with the beta and alpha subunits. In Oenococcus oeni (strain ATCC BAA-331 / PSU-1), this protein is DNA-directed RNA polymerase subunit omega.